A 272-amino-acid polypeptide reads, in one-letter code: 3-methyl-2-oxobutanoate hydroxymethyltransferase (272 aa).

Residues Asp53 and Asp92 each contribute to the Mg(2+) site. Residues 53–54, Asp92, and Lys120 each bind 3-methyl-2-oxobutanoate; that span reads DS. A Mg(2+)-binding site is contributed by Glu122. Glu189 serves as the catalytic Proton acceptor.

Belongs to the PanB family. Homodecamer; pentamer of dimers. It depends on Mg(2+) as a cofactor.

The protein resides in the cytoplasm. It catalyses the reaction 3-methyl-2-oxobutanoate + (6R)-5,10-methylene-5,6,7,8-tetrahydrofolate + H2O = 2-dehydropantoate + (6S)-5,6,7,8-tetrahydrofolate. It functions in the pathway cofactor biosynthesis; (R)-pantothenate biosynthesis; (R)-pantoate from 3-methyl-2-oxobutanoate: step 1/2. In terms of biological role, catalyzes the reversible reaction in which hydroxymethyl group from 5,10-methylenetetrahydrofolate is transferred onto alpha-ketoisovalerate to form ketopantoate. This is 3-methyl-2-oxobutanoate hydroxymethyltransferase from Ralstonia pickettii (strain 12J).